The sequence spans 124 residues: Small ribosomal subunit protein uS13 (124 aa).

The segment covering 94–117 has biased composition (basic residues); the sequence is NLPVRGQRTRTNARTRKGPRKTVA. The disordered stretch occupies residues 94 to 124; sequence NLPVRGQRTRTNARTRKGPRKTVANKKIESK.

Belongs to the universal ribosomal protein uS13 family. As to quaternary structure, part of the 30S ribosomal subunit. Forms a loose heterodimer with protein S19. Forms two bridges to the 50S subunit in the 70S ribosome.

Located at the top of the head of the 30S subunit, it contacts several helices of the 16S rRNA. In the 70S ribosome it contacts the 23S rRNA (bridge B1a) and protein L5 of the 50S subunit (bridge B1b), connecting the 2 subunits; these bridges are implicated in subunit movement. Contacts the tRNAs in the A and P-sites. This chain is Small ribosomal subunit protein uS13, found in Mycoplasma pneumoniae (strain ATCC 29342 / M129 / Subtype 1) (Mycoplasmoides pneumoniae).